We begin with the raw amino-acid sequence, 128 residues long: Sm-like protein LSM1A (128 aa).

Positions 10–85 (FFSTSLAAYL…VVLIGELDVE (76 aa)) constitute a Sm domain.

It belongs to the snRNP Sm proteins family. Component of the heptameric LSM1-LSM7 complex that forms a seven-membered ring structure with a donut shape. The LSM subunits are arranged in the order LSM1, LSM2, LSM3, LSM6, LSM5, LSM7 and LSM4. LSM1A subunit interacts only with its two neighboring subunits, LSM2 and LSM4. Expressed in roots, leaves, stems, flowers and siliques.

It is found in the cytoplasm. The protein resides in the P-body. In terms of biological role, component of the cytoplasmic LSM1-LSM7 complex which is involved in mRNA degradation by promoting decapping and leading to accurate 5'-3' mRNA decay. LSM1A and LSM1B are essential for the formation of the cytoplasmic LSM1-LSM7 complex which regulates developmental gene expression by the decapping of specific development-related transcripts. Required for P-body formation during heat stress. In Arabidopsis thaliana (Mouse-ear cress), this protein is Sm-like protein LSM1A.